We begin with the raw amino-acid sequence, 598 residues long: MALRCPIVSVLGHVDHGKTSLLDKIRSTRVTQREAGGITQHIGASEIPINTIKKVSKDLLGLFKADLTIPGLLVIDTPGHEAFTSLRKRGGALADIAILVVDMNEGFKPQTIEAINILKQCKTPFIVAANKLDRVPGWNSKEGPFILNFNEKNQHPNAMTEFEIRLYENVIKHLNELGFDADLFSRVKDTTKTINVVPVSAMTGEGIPDLLVIISGLAQKFLEQKLALNVEGYAKGTVLELKEEKGLGKTIDAIIYDGIAKTGDFLVVGNPQGVLVSKIKALLKPKELDEMRDPKDKFKPSKQISAATGVKISAPDLDNVIAGSPLRIVPKDQIENAKAEVLQEVEEFTILTDDEGIIIKADTMGSLEALANELRKVKAKIKKAEVGDISKKDVIEASSYASTNPLNGLIISFNTKVLSDAKAEIEKSDVKLLEGRIIYKLVEEYEEWVKEMEELMKSDEINRLTKPAMIKILPNCIFRQKEPAVCGVEVLYGTLKIGSPLMSEDGKKLGYVKEIRDNQQENIKEAKVGMQVPVSIDGNIVLGRNAKENDILYVEVPEPEARKLHHEFRDELRGDEKEALSRYMELKQKIENNIFWGM.

The tr-type G domain maps to 3–225; sequence LRCPIVSVLG…GLAQKFLEQK (223 aa). Residues 12 to 19 form a G1 region; the sequence is GHVDHGKT. GTP is bound at residue 12–19; that stretch reads GHVDHGKT. A G2 region spans residues 37–41; sequence GITQH. The tract at residues 76-79 is G3; that stretch reads DTPG. Residues 76–80 and 130–133 each bind GTP; these read DTPGH and NKLD. The tract at residues 130-133 is G4; it reads NKLD. Residues 200–202 form a G5 region; sequence SAM.

Belongs to the TRAFAC class translation factor GTPase superfamily. Classic translation factor GTPase family. IF-2 subfamily.

In terms of biological role, function in general translation initiation by promoting the binding of the formylmethionine-tRNA to ribosomes. Seems to function along with eIF-2. The polypeptide is Probable translation initiation factor IF-2 (Methanococcus maripaludis (strain C6 / ATCC BAA-1332)).